The sequence spans 214 residues: N-(5'-phosphoribosyl)anthranilate isomerase (214 aa).

The protein belongs to the TrpF family.

It carries out the reaction N-(5-phospho-beta-D-ribosyl)anthranilate = 1-(2-carboxyphenylamino)-1-deoxy-D-ribulose 5-phosphate. The protein operates within amino-acid biosynthesis; L-tryptophan biosynthesis; L-tryptophan from chorismate: step 3/5. The sequence is that of N-(5'-phosphoribosyl)anthranilate isomerase from Rhodospirillum centenum (strain ATCC 51521 / SW).